The following is a 92-amino-acid chain: Small ribosomal subunit protein uS19 (92 aa).

It belongs to the universal ribosomal protein uS19 family.

Protein S19 forms a complex with S13 that binds strongly to the 16S ribosomal RNA. The chain is Small ribosomal subunit protein uS19 from Geobacillus kaustophilus (strain HTA426).